The sequence spans 177 residues: NADH-quinone oxidoreductase subunit B (177 aa).

Positions 56, 57, 121, and 151 each coordinate [4Fe-4S] cluster.

The protein belongs to the complex I 20 kDa subunit family. NDH-1 is composed of 14 different subunits. Subunits NuoB, C, D, E, F, and G constitute the peripheral sector of the complex. The cofactor is [4Fe-4S] cluster.

The protein resides in the cell inner membrane. The catalysed reaction is a quinone + NADH + 5 H(+)(in) = a quinol + NAD(+) + 4 H(+)(out). NDH-1 shuttles electrons from NADH, via FMN and iron-sulfur (Fe-S) centers, to quinones in the respiratory chain. The immediate electron acceptor for the enzyme in this species is believed to be ubiquinone. Couples the redox reaction to proton translocation (for every two electrons transferred, four hydrogen ions are translocated across the cytoplasmic membrane), and thus conserves the redox energy in a proton gradient. This Rhodobacter capsulatus (Rhodopseudomonas capsulata) protein is NADH-quinone oxidoreductase subunit B.